The primary structure comprises 409 residues: Na(+)-translocating NADH-quinone reductase subunit F (409 aa).

A helical transmembrane segment spans residues 5–25 (FIFGIIAFTALVLVLAVIILF). Residues 34–128 (GDITISINND…SMDVELPEEI (95 aa)) enclose the 2Fe-2S ferredoxin-type domain. 4 residues coordinate [2Fe-2S] cluster: C71, C77, C80, and C112. Residues 131–271 (VKKWECTVIS…SGPFGEFFAK (141 aa)) form the FAD-binding FR-type domain.

This sequence belongs to the NqrF family. Composed of six subunits; NqrA, NqrB, NqrC, NqrD, NqrE and NqrF. Requires [2Fe-2S] cluster as cofactor. FAD serves as cofactor.

The protein localises to the cell inner membrane. The catalysed reaction is a ubiquinone + n Na(+)(in) + NADH + H(+) = a ubiquinol + n Na(+)(out) + NAD(+). Its function is as follows. NQR complex catalyzes the reduction of ubiquinone-1 to ubiquinol by two successive reactions, coupled with the transport of Na(+) ions from the cytoplasm to the periplasm. The first step is catalyzed by NqrF, which accepts electrons from NADH and reduces ubiquinone-1 to ubisemiquinone by a one-electron transfer pathway. The sequence is that of Na(+)-translocating NADH-quinone reductase subunit F from Actinobacillus pleuropneumoniae serotype 5b (strain L20).